We begin with the raw amino-acid sequence, 391 residues long: Formate-dependent phosphoribosylglycinamide formyltransferase (391 aa).

Residues 18–19 and E78 contribute to the N(1)-(5-phospho-beta-D-ribosyl)glycinamide site; that span reads EL. Residues R110, K151, 156 to 161, 191 to 194, and E199 each bind ATP; these read SSGKGQ and EEFI. An ATP-grasp domain is found at 115–305; that stretch reads ELAHEELGIR…EFELHLRAIL (191 aa). Residues E264 and E276 each contribute to the Mg(2+) site. N(1)-(5-phospho-beta-D-ribosyl)glycinamide-binding positions include D283, K353, and 360–361; that span reads RR.

This sequence belongs to the PurK/PurT family. In terms of assembly, homodimer.

It catalyses the reaction N(1)-(5-phospho-beta-D-ribosyl)glycinamide + formate + ATP = N(2)-formyl-N(1)-(5-phospho-beta-D-ribosyl)glycinamide + ADP + phosphate + H(+). The protein operates within purine metabolism; IMP biosynthesis via de novo pathway; N(2)-formyl-N(1)-(5-phospho-D-ribosyl)glycinamide from N(1)-(5-phospho-D-ribosyl)glycinamide (formate route): step 1/1. Involved in the de novo purine biosynthesis. Catalyzes the transfer of formate to 5-phospho-ribosyl-glycinamide (GAR), producing 5-phospho-ribosyl-N-formylglycinamide (FGAR). Formate is provided by PurU via hydrolysis of 10-formyl-tetrahydrofolate. This chain is Formate-dependent phosphoribosylglycinamide formyltransferase, found in Nostoc sp. (strain PCC 7120 / SAG 25.82 / UTEX 2576).